The following is an 89-amino-acid chain: MVKKSKVGSTGRFGARYGRKAKRTVKDIEDKMHAKHVCPKCDRPGVKRTHAGIWKCRKCGAVFTGGAYIPTTPMGKVAKRNIKRITGGE.

Positions Met1–Ile28 are disordered. The C4-type zinc-finger motif lies at Cys38–Cys59.

Belongs to the eukaryotic ribosomal protein eL43 family. It depends on Zn(2+) as a cofactor.

The sequence is that of Large ribosomal subunit protein eL43 from Methanosphaera stadtmanae (strain ATCC 43021 / DSM 3091 / JCM 11832 / MCB-3).